We begin with the raw amino-acid sequence, 476 residues long: Aspartyl/glutamyl-tRNA(Asn/Gln) amidotransferase subunit B (476 aa).

It belongs to the GatB/GatE family. GatB subfamily. As to quaternary structure, heterotrimer of A, B and C subunits.

The catalysed reaction is L-glutamyl-tRNA(Gln) + L-glutamine + ATP + H2O = L-glutaminyl-tRNA(Gln) + L-glutamate + ADP + phosphate + H(+). The enzyme catalyses L-aspartyl-tRNA(Asn) + L-glutamine + ATP + H2O = L-asparaginyl-tRNA(Asn) + L-glutamate + ADP + phosphate + 2 H(+). Its function is as follows. Allows the formation of correctly charged Asn-tRNA(Asn) or Gln-tRNA(Gln) through the transamidation of misacylated Asp-tRNA(Asn) or Glu-tRNA(Gln) in organisms which lack either or both of asparaginyl-tRNA or glutaminyl-tRNA synthetases. The reaction takes place in the presence of glutamine and ATP through an activated phospho-Asp-tRNA(Asn) or phospho-Glu-tRNA(Gln). The protein is Aspartyl/glutamyl-tRNA(Asn/Gln) amidotransferase subunit B of Clostridium botulinum (strain Langeland / NCTC 10281 / Type F).